The sequence spans 30 residues: Snaclec carinactivase-1 regulatory subunit 17 kDa chain (30 aa).

Positions 1–30 constitute a C-type lectin domain; the sequence is DCLPGWSSHEGHCYKVFNQEMYWADAEKFC. Cys-2 and Cys-13 form a disulfide bridge.

The protein belongs to the snaclec family. In terms of assembly, heterodimer of a metalloproteinase subunit and a regulatory subunit comprising two polypeptides disulfide-linked (14 kDa and 17 kDa chains). In terms of tissue distribution, expressed by the venom gland.

Its subcellular location is the secreted. Calcium-dependent prothrombin activator. This protein may activate prothrombin via recognition by the regulatory subunit of the calcium ion bound conformation of its gamma-carboxyglutamic acid (GLA) domain, and the subsequent conversion of prothrombin to active thrombin is catalyzed by the catalytic subunit. This chain is Snaclec carinactivase-1 regulatory subunit 17 kDa chain, found in Echis carinatus (Saw-scaled viper).